The sequence spans 394 residues: Phosphoglycerate kinase (394 aa).

Residues 21-23 (DFN), Arg-37, 60-63 (HLGR), Arg-119, and Arg-152 each bind substrate. Residues Lys-202, Glu-324, and 350 to 353 (GGDS) each bind ATP.

It belongs to the phosphoglycerate kinase family. As to quaternary structure, monomer.

The protein resides in the cytoplasm. The enzyme catalyses (2R)-3-phosphoglycerate + ATP = (2R)-3-phospho-glyceroyl phosphate + ADP. Its pathway is carbohydrate degradation; glycolysis; pyruvate from D-glyceraldehyde 3-phosphate: step 2/5. The polypeptide is Phosphoglycerate kinase (Herpetosiphon aurantiacus (strain ATCC 23779 / DSM 785 / 114-95)).